We begin with the raw amino-acid sequence, 432 residues long: Trigger factor (432 aa).

A PPIase FKBP-type domain is found at 161–246 (GTRATINFVG…VVKVESRELP (86 aa)).

Belongs to the FKBP-type PPIase family. Tig subfamily.

It localises to the cytoplasm. The catalysed reaction is [protein]-peptidylproline (omega=180) = [protein]-peptidylproline (omega=0). Involved in protein export. Acts as a chaperone by maintaining the newly synthesized protein in an open conformation. Functions as a peptidyl-prolyl cis-trans isomerase. The polypeptide is Trigger factor (Aliivibrio fischeri (strain ATCC 700601 / ES114) (Vibrio fischeri)).